The chain runs to 404 residues: Metacaspase-1 (404 aa).

Positions 1 to 97 (MHHHHQQPSY…NPQAFGHGAP (97 aa)) are disordered. Residues His195 and Cys251 contribute to the active site.

This sequence belongs to the peptidase C14B family.

Involved in cell death (apoptosis). The protein is Metacaspase-1 (casA) of Emericella nidulans (strain FGSC A4 / ATCC 38163 / CBS 112.46 / NRRL 194 / M139) (Aspergillus nidulans).